The following is a 25-amino-acid chain: Ocellatin-L1 (25 aa).

At Leu-25 the chain carries Leucine amide.

It belongs to the frog skin active peptide (FSAP) family. Ocellatin subfamily. In terms of tissue distribution, expressed by the skin glands.

It localises to the secreted. Functionally, antimicrobial peptide with activity against Gram-negative bacteria but without activity against Gram-positive bacteria. Shows a low activity in stimulating insulin release from rat BRIN-BD11 beta cells, and acts without loss of integrity of the plasma membrane. Has very low hemolytic activity. Shows weak amphipathicity in its alpha-helical conformation. In Leptodactylus laticeps (Santa Fe frog), this protein is Ocellatin-L1.